We begin with the raw amino-acid sequence, 250 residues long: Putative apoptosis inhibitor ORF99 (250 aa).

The BIR repeat unit spans residues 13-78 (RVNSFGGWSK…KFSGDCLYLK (66 aa)).

May act as an apoptosis inhibitor. This is Putative apoptosis inhibitor ORF99 from Ostreid herpesvirus 1 (isolate France) (OsHV-1).